A 106-amino-acid chain; its full sequence is Small ribosomal subunit protein uS10 (106 aa).

This sequence belongs to the universal ribosomal protein uS10 family. As to quaternary structure, part of the 30S ribosomal subunit.

Functionally, involved in the binding of tRNA to the ribosomes. This Synechococcus sp. (strain CC9311) protein is Small ribosomal subunit protein uS10.